Reading from the N-terminus, the 121-residue chain is Anther-specific protein SF2 (121 aa).

Residues 1-21 form the signal peptide; the sequence is MANNSVSYLVLLLLVFVLAIS. N-linked (GlcNAc...) asparagine glycosylation occurs at N115.

In terms of tissue distribution, epidermal anther cells.

Its subcellular location is the secreted. The protein resides in the cell wall. Its function is as follows. Anther-specific cell wall protein which could contribute to the cell wall architecture of epidermal anther cells via intermolecular disulfide bridges. This chain is Anther-specific protein SF2, found in Helianthus annuus (Common sunflower).